Consider the following 368-residue polypeptide: Protein L-Myc (368 aa).

Disordered stretches follow at residues 39–79 (PPTS…RGHS), 112–179 (RLAP…EKRR), and 218–295 (FPPE…FLER). Residues 135–147 (LEASNPAPATQCQ) show a composition bias toward polar residues. The segment covering 247–258 (EEEEEEEEEEEI) has biased composition (acidic residues). Basic and acidic residues predominate over residues 283–294 (DVTKRKNHNFLE). One can recognise a bHLH domain in the interval 285 to 337 (TKRKNHNFLERKRRNDLRSRFLALRDQVPTLASCSKAPKVVILSKALEYLQAL). A leucine-zipper region spans residues 337–365 (LVGAEKKMATEKRQLRCRQQQLQKRIAYL).

In terms of assembly, efficient DNA binding requires dimerization with another bHLH protein. Binds DNA as a heterodimer with MAX.

It localises to the nucleus. The protein is Protein L-Myc (Mycl) of Mus musculus (Mouse).